Here is a 482-residue protein sequence, read N- to C-terminus: Exodeoxyribonuclease I (482 aa).

Residues 13–194 enclose the Exonuclease domain; it reads LFYDYETFGI…TSDVYATIEL (182 aa). Residues aspartate 16, glutamate 18, and aspartate 187 each contribute to the Mg(2+) site. Position 18 (glutamate 18) interacts with substrate. Positions 203-351 constitute an ExoI SH3-like domain; sequence PKLFDFFFKY…LVKNVLLKKN (149 aa). The region spanning 355-471 is the ExoI C-terminal domain; it reads NSLNVDLQIY…DLLKYVFKKY (117 aa).

As to quaternary structure, monomer. Interacts with ssb (via C-terminus); this interaction stimulates the exonuclease activity by recruiting the enzyme to its substrate. Requires Mg(2+) as cofactor.

It carries out the reaction Exonucleolytic cleavage in the 3'- to 5'-direction to yield nucleoside 5'-phosphates.. In terms of biological role, degrades single-stranded DNA (ssDNA) in a highly processive manner. Also functions as a DNA deoxyribophosphodiesterase that releases deoxyribose-phosphate moieties following the cleavage of DNA at an apurinic/apyrimidinic (AP) site by either an AP endonuclease or AP lyase. The polypeptide is Exodeoxyribonuclease I (sbcB) (Buchnera aphidicola subsp. Schizaphis graminum (strain Sg)).